We begin with the raw amino-acid sequence, 448 residues long: L-seryl-tRNA(Sec) selenium transferase (448 aa).

Lys-284 carries the N6-(pyridoxal phosphate)lysine modification.

Belongs to the SelA family. Pyridoxal 5'-phosphate is required as a cofactor.

It is found in the cytoplasm. The catalysed reaction is L-seryl-tRNA(Sec) + selenophosphate + H(+) = L-selenocysteinyl-tRNA(Sec) + phosphate. The protein operates within aminoacyl-tRNA biosynthesis; selenocysteinyl-tRNA(Sec) biosynthesis; selenocysteinyl-tRNA(Sec) from L-seryl-tRNA(Sec) (bacterial route): step 1/1. Converts seryl-tRNA(Sec) to selenocysteinyl-tRNA(Sec) required for selenoprotein biosynthesis. The sequence is that of L-seryl-tRNA(Sec) selenium transferase from Nautilia profundicola (strain ATCC BAA-1463 / DSM 18972 / AmH).